We begin with the raw amino-acid sequence, 380 residues long: Kappa-type opioid receptor (380 aa).

The Extracellular segment spans residues 1-57 (MDSPIQIFRGEPGPTCAPSACLPPNSSAWFPGWAEPDSNGSAGSEDAQLEPAHISPA). Asn-25 and Asn-39 each carry an N-linked (GlcNAc...) asparagine glycan. A helical membrane pass occupies residues 58-85 (IPVIITAVYSVVFVVGLVGNSLVMFVII). Topologically, residues 86–95 (RYTKMKTATN) are cytoplasmic. Residues 96–119 (IYIFNLALADALVTTTMPFQSTVY) traverse the membrane as a helical segment. The Extracellular portion of the chain corresponds to 120–132 (LMNSWPFGDVLCK). Cys-131 and Cys-210 are oxidised to a cystine. The chain crosses the membrane as a helical span at residues 133-154 (IVISIDYYNMFTSIFTLTMMSV). The Cytoplasmic portion of the chain corresponds to 155 to 173 (DRYIAVCHPVKALDFRTPL). The helical transmembrane segment at 174-196 (KAKIINICIWLLSSSVGISAIVL) threads the bilayer. Topologically, residues 197–222 (GGTKVREDVDVIECSLQFPDDDYSWW) are extracellular. The chain crosses the membrane as a helical span at residues 223–247 (DLFMKICVFIFAFVIPVLIIIVCYT). The Cytoplasmic portion of the chain corresponds to 248–274 (LMILRLKSVRLLSGSREKDRNLRRITR). The helical transmembrane segment at 275 to 296 (LVLVVVAVFVVCWTPIHIFILV) threads the bilayer. The Extracellular segment spans residues 297–311 (EALGSTSHSTAALSS). Residues 312 to 333 (YYFCIALGYTNSSLNPILYAFL) form a helical membrane-spanning segment. The Cytoplasmic portion of the chain corresponds to 334-380 (DENFKRCFRDFCFPLKMRMERQSTSRVRNTVQDPAYLRDIDGMNKPV). A lipid anchor (S-palmitoyl cysteine) is attached at Cys-345.

It belongs to the G-protein coupled receptor 1 family. Interacts with NHERF1. Interacts with GABARAPL1. As to expression, detected in brain and placenta.

It localises to the cell membrane. G-protein coupled opioid receptor that functions as a receptor for endogenous alpha-neoendorphins and dynorphins, but has low affinity for beta-endorphins. Also functions as a receptor for various synthetic opioids and for the psychoactive diterpene salvinorin A. Ligand binding causes a conformation change that triggers signaling via guanine nucleotide-binding proteins (G proteins) and modulates the activity of down-stream effectors, such as adenylate cyclase. Signaling leads to the inhibition of adenylate cyclase activity. Inhibits neurotransmitter release by reducing calcium ion currents and increasing potassium ion conductance. Plays a role in the perception of pain. Plays a role in mediating reduced physical activity upon treatment with synthetic opioids. Plays a role in the regulation of salivation in response to synthetic opioids. May play a role in arousal and regulation of autonomic and neuroendocrine functions. The chain is Kappa-type opioid receptor (OPRK1) from Homo sapiens (Human).